A 380-amino-acid polypeptide reads, in one-letter code: Gonadotropin-releasing hormone II receptor (380 aa).

At 1–40 (MSAVNGTPWGSSAREEVWAGSGVEVEGSELPTFSTAAKVR) the chain is on the extracellular side. Residues 41-60 (VGVTIVLFVSSAGGNLAVLW) traverse the membrane as a helical segment. Residues 61–76 (SVTRPQPSQLRPSPVR) are Cytoplasmic-facing. A helical transmembrane segment spans residues 77 to 96 (RLFAHLAAADLLVTFVVMPL). Residues 97 to 114 (DATWNITVQWLAGDIACR) lie on the Extracellular side of the membrane. Asn-101 carries an N-linked (GlcNAc...) asparagine glycan. A disulfide bridge links Cys-113 with Cys-188. The chain crosses the membrane as a helical span at residues 115–136 (TLMFLKLMAMYAAAFLPVVIGL). Over 137–160 (DRQAAVLNPLGSRSGVRKLLGAAW) the chain is Cytoplasmic. The chain crosses the membrane as a helical span at residues 161–178 (GLSFLLALPQLFLFHTVH). Residues 179–204 (RAGPVPFTQCATKGSFKARWQETTYN) lie on the Extracellular side of the membrane. A helical transmembrane segment spans residues 205 to 224 (LFTFCCLFLLPLTAMAICYS). Residues 225 to 278 (RIVLGVSSPRTRKGSHAPAGEFALRRSFDNRPRVRLRALRLALLVLLTFILCWT) are Cytoplasmic-facing. The helical transmembrane segment at 279–297 (PYYLLGLWYWFSPSMLSEV) threads the bilayer. The Extracellular segment spans residues 298-303 (PPSLSH). The helical transmembrane segment at 304–323 (ILFLFGLLNAPLDPLLYGAF) threads the bilayer. The Cytoplasmic segment spans residues 324-380 (TLGCRRGHQELSMDSSREEGSRRMFQQDIQALRQTEVQKTVTSRKAGETKDIPITSI).

Belongs to the G-protein coupled receptor 1 family. In terms of processing, phosphorylated on the C-terminal cytoplasmic tail.

The protein resides in the cell membrane. Its function is as follows. Receptor for gonadotropin releasing hormone II (GnRH II). This receptor mediates its action by association with G proteins that activate a phosphatidylinositol-calcium second messenger system. The chain is Gonadotropin-releasing hormone II receptor (GNRHR2) from Callithrix jacchus (White-tufted-ear marmoset).